The following is a 212-amino-acid chain: MKKSNLDLLILLAKAGGIEKEILTTSRELSKMLNVSPQTIVRWLEDLEKDGLIKKSESRKGTLVTITEEGVKFLEKLHEELSDALYRGIIIGEVVSGIGEGAYYVRQYAPLIREYLGFDPYPGTLNVRVIFPKTIFDALCNVRPIIIPGFTKEGRTFGDVRAYRVKIDNIEGAIVIPSRTIHPPKIAEIIAPVNLRKTLNLKDGDRIRIKTL.

The tract at residues 1 to 87 (MKKSNLDLLI…HEELSDALYR (87 aa)) is H-T-H motif-like. A riboflavin kinase region spans residues 88 to 212 (GIIIGEVVSG…DGDRIRIKTL (125 aa)). 97–102 (GIGEGA) contacts CDP. 2 residues coordinate Mg(2+): T124 and N126. Residues T180 and E188 each contribute to the FMN site. Residue 193 to 196 (VNLR) participates in CDP binding.

This sequence belongs to the archaeal riboflavin kinase family. Requires Mg(2+) as cofactor.

It catalyses the reaction riboflavin + CTP = CDP + FMN + H(+). The protein operates within cofactor biosynthesis; FMN biosynthesis; FMN from riboflavin (CTP route): step 1/1. Functionally, catalyzes the CTP-dependent phosphorylation of riboflavin (vitamin B2) to form flavin mononucleotide (FMN). The protein is Riboflavin kinase (ribK) of Pyrococcus furiosus (strain ATCC 43587 / DSM 3638 / JCM 8422 / Vc1).